Consider the following 459-residue polypeptide: Methionine aminopeptidase 2-1 (459 aa).

Positions 1–12 are enriched in basic and acidic residues; sequence MGSKSPEDHRQG. Residues 1–79 are disordered; it reads MGSKSPEDHR…RKRNKKKSKK (79 aa). Over residues 43–54 the composition is skewed to acidic residues; that stretch reads GQDEDGDDDDDE. Positions 67–79 are enriched in basic residues; sequence KKKRKRNKKKSKK. His-210 contributes to the substrate binding site. Positions 231, 242, and 311 each coordinate a divalent metal cation. His-319 contacts substrate. A divalent metal cation contacts are provided by Glu-344 and Glu-440.

It belongs to the peptidase M24A family. Methionine aminopeptidase eukaryotic type 2 subfamily. The cofactor is Co(2+). Requires Zn(2+) as cofactor. Mn(2+) is required as a cofactor. Fe(2+) serves as cofactor.

It is found in the cytoplasm. It catalyses the reaction Release of N-terminal amino acids, preferentially methionine, from peptides and arylamides.. Functionally, cotranslationally removes the N-terminal methionine from nascent proteins. The N-terminal methionine is often cleaved when the second residue in the primary sequence is small and uncharged (Met-Ala-, Cys, Gly, Pro, Ser, Thr, or Val). This is Methionine aminopeptidase 2-1 from Pyrenophora tritici-repentis (strain Pt-1C-BFP) (Wheat tan spot fungus).